Here is a 257-residue protein sequence, read N- to C-terminus: NAD-capped RNA hydrolase NudC (257 aa).

Substrate contacts are provided by lysine 25 and arginine 69. Zn(2+)-binding residues include cysteine 98 and cysteine 101. A substrate-binding site is contributed by glutamate 111. Zn(2+)-binding residues include cysteine 116 and cysteine 119. Tyrosine 124 contacts substrate. In terms of domain architecture, Nudix hydrolase spans 125-248 (PQIAPCIIVA…TVARRLIEDT (124 aa)). Positions 158, 174, and 178 each coordinate a divalent metal cation. The Nudix box signature appears at 159–180 (GFVEVGETLEQAVAREVMEESG). 192–199 (QPWPFPQS) lines the substrate pocket. Position 219 (glutamate 219) interacts with a divalent metal cation. Residue alanine 241 participates in substrate binding.

It belongs to the Nudix hydrolase family. NudC subfamily. As to quaternary structure, homodimer. It depends on Mg(2+) as a cofactor. Requires Mn(2+) as cofactor. Zn(2+) is required as a cofactor.

The enzyme catalyses a 5'-end NAD(+)-phospho-ribonucleoside in mRNA + H2O = a 5'-end phospho-adenosine-phospho-ribonucleoside in mRNA + beta-nicotinamide D-ribonucleotide + 2 H(+). It carries out the reaction NAD(+) + H2O = beta-nicotinamide D-ribonucleotide + AMP + 2 H(+). It catalyses the reaction NADH + H2O = reduced beta-nicotinamide D-ribonucleotide + AMP + 2 H(+). In terms of biological role, mRNA decapping enzyme that specifically removes the nicotinamide adenine dinucleotide (NAD) cap from a subset of mRNAs by hydrolyzing the diphosphate linkage to produce nicotinamide mononucleotide (NMN) and 5' monophosphate mRNA. The NAD-cap is present at the 5'-end of some mRNAs and stabilizes RNA against 5'-processing. Has preference for mRNAs with a 5'-end purine. Catalyzes the hydrolysis of a broad range of dinucleotide pyrophosphates. The polypeptide is NAD-capped RNA hydrolase NudC (Shigella flexneri serotype 5b (strain 8401)).